The following is a 509-amino-acid chain: Maturase K (509 aa).

This sequence belongs to the intron maturase 2 family. MatK subfamily.

Its subcellular location is the plastid. Its function is as follows. Usually encoded in the trnK tRNA gene intron. Probably assists in splicing its own and other chloroplast group II introns. The chain is Maturase K from Cuscuta reflexa (Southern Asian dodder).